We begin with the raw amino-acid sequence, 1133 residues long: Sterol regulatory element-binding protein 2 (1133 aa).

A transcriptional activation (acidic) region spans residues 1–50; it reads MDENSELGGLETMETLTELGDELTLGDIDEMLQFVSNQVGEFSDLFSEQL. The Cytoplasmic segment spans residues 1–473; that stretch reads MDENSELGGL…VALGMVDRSR (473 aa). Residues 56–65 are compositionally biased toward gly residues; sequence GGGGGSGSGG. The interval 56–136 is disordered; the sequence is GGGGGSGSGG…PQPQPQPPAQ (81 aa). Positions 92 to 109 are enriched in low complexity; it reads PLSTFSPSSTSPQAPALQ. Positions 114 to 134 are enriched in pro residues; the sequence is PTPPRATPVLQPRPQPQPQPP. An interaction with LMNA region spans residues 229–483; it reads QQVPVLVQPQ…ILLCVLTFLG (255 aa). Residues 322–372 form the bHLH domain; that stretch reads ERRTTHNIIEKRYRSSINDKIIELKDLVMGTDAKMHKSGVLRKAIDYIKYL. Residues 372–393 are leucine-zipper; sequence LQQVNHKLRQENMVLKLANQKN. Residue K456 forms a Glycyl lysine isopeptide (Lys-Gly) (interchain with G-Cter in SUMO2) linkage. The helical transmembrane segment at 474 to 494 threads the bilayer; that stretch reads ILLCVLTFLGLSFNPLTSLLQ. At 495–525 the chain is on the lumenal side; that stretch reads WGGAHNPDQHPYSGSGRNVLSLESGSGGWFD. A helical membrane pass occupies residues 526–546; it reads WMMPTLLLWLLNGVIVLSVFV. The Cytoplasmic portion of the chain corresponds to 547–1133; it reads KLLVHGEPVI…LGGGTAIAAS (587 aa). At S1090 the chain carries Phosphoserine.

The protein belongs to the SREBP family. Homodimer; efficient DNA binding of the soluble transcription factor fragment requires dimerization with another bHLH protein. Interacts with LMNA. In terms of assembly, forms a tight complex with SCAP, the SCAP-SREBP complex, in the endoplasmic reticulum membrane and the Golgi apparatus. Interacts with PAQR3; the interaction anchors the SCAP-SREBP complex to the Golgi apparatus in low cholesterol conditions. Interacts (via C-terminal domain) with RNF139. Post-translationally, processed in the Golgi apparatus, releasing the protein from the membrane. At low cholesterol the SCAP-SREBP complex is recruited into COPII vesicles for export from the endoplasmic reticulum. In the Golgi, complex SREBPs are cleaved sequentially by site-1 (MBTPS1, S1P) and site-2 (MBTPS2, S2P) proteases. The first cleavage by site-1 protease occurs within the luminal loop, the second cleavage by site-2 protease occurs within the first transmembrane domain, releasing the transcription factor from the Golgi membrane. Apoptosis triggers cleavage by the cysteine proteases caspase-3 and caspase-7. Cleavage and activation is induced by mediated cholesterol efflux. In terms of processing, phosphorylated by AMPK, leading to suppress protein processing and nuclear translocation, and repress target gene expression. SCAP-free SREBF2 is ubiquitinated by the BCR(ARMC5) complex, leading to its degradation. Post-translationally, ubiquitinated; the nuclear form has a rapid turnover and is rapidly ubiquitinated and degraded by the proteasome in the nucleus.

The protein resides in the endoplasmic reticulum membrane. It is found in the golgi apparatus membrane. It localises to the cytoplasmic vesicle. The protein localises to the COPII-coated vesicle membrane. Its subcellular location is the nucleus. Its activity is regulated as follows. Activation by cleavage is down-regulated upon activation of SIRT3-dependent PRKAA1/AMPK-alpha signaling cascade which leads to inhibition of ATP-consuming lipogenesis to restore cellular energy balance. In terms of biological role, precursor of the transcription factor form (Processed sterol regulatory element-binding protein 2), which is embedded in the endoplasmic reticulum membrane. Low sterol concentrations promote processing of this form, releasing the transcription factor form that translocates into the nucleus and activates transcription of genes involved in cholesterol biosynthesis. Functionally, key transcription factor that regulates expression of genes involved in cholesterol biosynthesis. Binds to the sterol regulatory element 1 (SRE-1) (5'-ATCACCCCAC-3'). Has dual sequence specificity binding to both an E-box motif (5'-ATCACGTGA-3') and to SRE-1 (5'-ATCACCCCAC-3'). Regulates transcription of genes related to cholesterol synthesis pathway. Regulates hepatic lipogenesis. This is Sterol regulatory element-binding protein 2 from Rattus norvegicus (Rat).